Reading from the N-terminus, the 261-residue chain is Indole-3-glycerol phosphate synthase (261 aa).

This sequence belongs to the TrpC family.

It catalyses the reaction 1-(2-carboxyphenylamino)-1-deoxy-D-ribulose 5-phosphate + H(+) = (1S,2R)-1-C-(indol-3-yl)glycerol 3-phosphate + CO2 + H2O. It functions in the pathway amino-acid biosynthesis; L-tryptophan biosynthesis; L-tryptophan from chorismate: step 4/5. The protein is Indole-3-glycerol phosphate synthase of Burkholderia lata (strain ATCC 17760 / DSM 23089 / LMG 22485 / NCIMB 9086 / R18194 / 383).